Here is a 93-residue protein sequence, read N- to C-terminus: Small ribosomal subunit protein uS19 (93 aa).

The protein belongs to the universal ribosomal protein uS19 family.

Functionally, protein S19 forms a complex with S13 that binds strongly to the 16S ribosomal RNA. This chain is Small ribosomal subunit protein uS19, found in Geobacter sulfurreducens (strain ATCC 51573 / DSM 12127 / PCA).